Consider the following 1471-residue polypeptide: Gag-Pol polyprotein (1471 aa).

Glycine 2 is lipidated: N-myristoyl glycine; by host. The segment at 7-31 is interaction with Gp41; that stretch reads VLSGKKTDELEKVRLRPGGKKRYCL. A Nuclear export signal motif is present at residues 16 to 22; the sequence is LEKVRLR. The Nuclear localization signal motif lies at 26-32; it reads KKRYCLK. Basic and acidic residues predominate over residues 105 to 114; that stretch reads QRHLAADTEK. A disordered region spans residues 105–130; the sequence is QRHLAADTEKMPATSRPTAPPSGGNY. Tyrosine 130 carries the post-translational modification Phosphotyrosine; by host. Residues 186 to 223 are interaction with human PPIA/CYPA and NUP153; sequence NCVGDHQAAMQIIREIINEEAADWDQQHPIPGPLPAGQ. The tract at residues 274 to 360 is dimerization/Multimerization of capsid protein p24; that stretch reads YNPTNILDIK…GGPGQKARLM (87 aa). 2 consecutive CCHC-type zinc fingers follow at residues 388–405 and 409–426; these read VTCWNCGKVGHTAKQCRA and QGCWKCGKQGHIMSKCPE. The segment at 441–508 is disordered; sequence ASQLPHDPSA…PRETLQGGDR (68 aa). Positions 484 to 501 are enriched in basic and acidic residues; the sequence is DAEKLHEDGETAEREPRE. A dimerization of protease region spans residues 513–517; sequence PQFSL. In terms of domain architecture, Peptidase A2 spans 533–602; sequence EVLLDTGADD…PINIFGRNIL (70 aa). Aspartate 537 (for protease activity; shared with dimeric partner) is an active-site residue. Dimerization of protease regions lie at residues 561-567 and 600-612; these read GIGGFIN and NILNTLGMTLNFP. A Reverse transcriptase domain is found at 656-846; sequence GQLEEAPPTN…PFKWMGYELW (191 aa). Aspartate 721, aspartate 796, and aspartate 797 together coordinate Mg(2+). The segment at 838–846 is RT 'primer grip'; sequence FKWMGYELW. The short motif at 1008–1024 is the Tryptophan repeat motif element; it reads WDQWWTDYWQVTWIPEW. Residues 1044–1167 enclose the RNase H type-1 domain; the sequence is LEKVETYYTD…VDHLVSQGIR (124 aa). 4 residues coordinate Mg(2+): aspartate 1053, glutamate 1088, aspartate 1108, and aspartate 1159. The segment at 1173–1214 adopts an Integrase-type zinc-finger fold; the sequence is EKIEPAQEEHEKYHGNVKELVHKFGLPQLVAKQIVNSCDKCQ. Residues histidine 1182, histidine 1186, cysteine 1210, and cysteine 1213 each contribute to the Zn(2+) site. One can recognise an Integrase catalytic domain in the interval 1224–1375; the sequence is VNAELGTWQM…PAERLVNMIT (152 aa). Residues aspartate 1234, aspartate 1286, and glutamate 1322 each contribute to the Mg(2+) site. The segment at residues 1393 to 1440 is a DNA-binding region (integrase-type); the sequence is FQVYYREGRDQLWKGPGELLWKGEGAVLIKVGTEIKVIPRRKAKIIRH.

As to quaternary structure, homotrimer; further assembles as hexamers of trimers. Interacts with gp41 (via C-terminus). Interacts with host CALM1; this interaction induces a conformational change in the Matrix protein, triggering exposure of the myristate group. Interacts with host AP3D1; this interaction allows the polyprotein trafficking to multivesicular bodies during virus assembly. Part of the pre-integration complex (PIC) which is composed of viral genome, matrix protein, Vpr and integrase. Homodimer; the homodimer further multimerizes as homohexamers or homopentamers. Interacts with human PPIA/CYPA. Interacts with human NUP153. Interacts with host PDZD8; this interaction stabilizes the capsid. Interacts with monkey TRIM5; this interaction destabilizes the capsid. In terms of assembly, homodimer, whose active site consists of two apposed aspartic acid residues. As to quaternary structure, heterodimer of p66 RT and p51 RT (RT p66/p51). Heterodimerization of RT is essential for DNA polymerase activity. The overall folding of the subdomains is similar in p66 RT and p51 RT but the spatial arrangements of the subdomains are dramatically different. Homotetramer; may further associate as a homohexadecamer. Part of the pre-integration complex (PIC) which is composed of viral genome, matrix protein, Vpr and integrase. Interacts with human SMARCB1/INI1 and human PSIP1/LEDGF isoform 1. Interacts with human KPNA3; this interaction might play a role in nuclear import of the pre-integration complex. Interacts with human NUP153; this interaction might play a role in nuclear import of the pre-integration complex. Requires Mg(2+) as cofactor. Post-translationally, specific enzymatic cleavages by the viral protease yield mature proteins. The protease is released by autocatalytic cleavage. The polyprotein is cleaved during and after budding, this process is termed maturation. Proteolytic cleavage of p66 RT removes the RNase H domain to yield the p51 RT subunit. Nucleocapsid protein p7 might be further cleaved after virus entry.

It localises to the host cell membrane. It is found in the host endosome. The protein localises to the host multivesicular body. The protein resides in the virion membrane. Its subcellular location is the host nucleus. It localises to the host cytoplasm. It is found in the virion. The enzyme catalyses Endopeptidase for which the P1 residue is preferably hydrophobic.. It catalyses the reaction Endohydrolysis of RNA in RNA/DNA hybrids. Three different cleavage modes: 1. sequence-specific internal cleavage of RNA. Human immunodeficiency virus type 1 and Moloney murine leukemia virus enzymes prefer to cleave the RNA strand one nucleotide away from the RNA-DNA junction. 2. RNA 5'-end directed cleavage 13-19 nucleotides from the RNA end. 3. DNA 3'-end directed cleavage 15-20 nucleotides away from the primer terminus.. It carries out the reaction 3'-end directed exonucleolytic cleavage of viral RNA-DNA hybrid.. The catalysed reaction is DNA(n) + a 2'-deoxyribonucleoside 5'-triphosphate = DNA(n+1) + diphosphate. Protease: The viral protease is inhibited by many synthetic protease inhibitors (PIs), such as amprenavir, atazanavir, indinavir, loprinavir, nelfinavir, ritonavir and saquinavir. Use of protease inhibitors in tritherapy regimens permit more ambitious therapeutic strategies. Reverse transcriptase/ribonuclease H: RT can be inhibited either by nucleoside RT inhibitors (NRTIs) or by non nucleoside RT inhibitors (NNRTIs). NRTIs act as chain terminators, whereas NNRTIs inhibit DNA polymerization by binding a small hydrophobic pocket near the RT active site and inducing an allosteric change in this region. Classical NRTIs are abacavir, adefovir (PMEA), didanosine (ddI), lamivudine (3TC), stavudine (d4T), tenofovir (PMPA), zalcitabine (ddC), and zidovudine (AZT). Classical NNRTIs are atevirdine (BHAP U-87201E), delavirdine, efavirenz (DMP-266), emivirine (I-EBU), and nevirapine (BI-RG-587). The tritherapies used as a basic effective treatment of AIDS associate two NRTIs and one NNRTI. Mediates, with Gag polyprotein, the essential events in virion assembly, including binding the plasma membrane, making the protein-protein interactions necessary to create spherical particles, recruiting the viral Env proteins, and packaging the genomic RNA via direct interactions with the RNA packaging sequence (Psi). Gag-Pol polyprotein may regulate its own translation, by the binding genomic RNA in the 5'-UTR. At low concentration, the polyprotein would promote translation, whereas at high concentration, the polyprotein would encapsidate genomic RNA and then shut off translation. Its function is as follows. Targets the polyprotein to the plasma membrane via a multipartite membrane-binding signal, that includes its myristoylated N-terminus. Matrix protein is part of the pre-integration complex. Implicated in the release from host cell mediated by Vpu. Binds to RNA. Functionally, forms the conical core that encapsulates the genomic RNA-nucleocapsid complex in the virion. Most core are conical, with only 7% tubular. The core is constituted by capsid protein hexamer subunits. The core is disassembled soon after virion entry. Host restriction factors such as TRIM5-alpha or TRIMCyp bind retroviral capsids and cause premature capsid disassembly, leading to blocks in reverse transcription. Capsid restriction by TRIM5 is one of the factors which restricts HIV-1 to the human species. Host PIN1 apparently facilitates the virion uncoating. On the other hand, interactions with PDZD8 or CYPA stabilize the capsid. In terms of biological role, encapsulates and protects viral dimeric unspliced genomic RNA (gRNA). Binds these RNAs through its zinc fingers. Acts as a nucleic acid chaperone which is involved in rearangement of nucleic acid secondary structure during gRNA retrotranscription. Also facilitates template switch leading to recombination. As part of the polyprotein, participates in gRNA dimerization, packaging, tRNA incorporation and virion assembly. Aspartyl protease that mediates proteolytic cleavages of Gag and Gag-Pol polyproteins during or shortly after the release of the virion from the plasma membrane. Cleavages take place as an ordered, step-wise cascade to yield mature proteins. This process is called maturation. Displays maximal activity during the budding process just prior to particle release from the cell. Also cleaves Nef and Vif, probably concomitantly with viral structural proteins on maturation of virus particles. Hydrolyzes host EIF4GI and PABP1 in order to shut off the capped cellular mRNA translation. The resulting inhibition of cellular protein synthesis serves to ensure maximal viral gene expression and to evade host immune response. Its function is as follows. Multifunctional enzyme that converts the viral RNA genome into dsDNA in the cytoplasm, shortly after virus entry into the cell. This enzyme displays a DNA polymerase activity that can copy either DNA or RNA templates, and a ribonuclease H (RNase H) activity that cleaves the RNA strand of RNA-DNA heteroduplexes in a partially processive 3' to 5' endonucleasic mode. Conversion of viral genomic RNA into dsDNA requires many steps. A tRNA(3)-Lys binds to the primer-binding site (PBS) situated at the 5'-end of the viral RNA. RT uses the 3' end of the tRNA primer to perform a short round of RNA-dependent minus-strand DNA synthesis. The reading proceeds through the U5 region and ends after the repeated (R) region which is present at both ends of viral RNA. The portion of the RNA-DNA heteroduplex is digested by the RNase H, resulting in a ssDNA product attached to the tRNA primer. This ssDNA/tRNA hybridizes with the identical R region situated at the 3' end of viral RNA. This template exchange, known as minus-strand DNA strong stop transfer, can be either intra- or intermolecular. RT uses the 3' end of this newly synthesized short ssDNA to perform the RNA-dependent minus-strand DNA synthesis of the whole template. RNase H digests the RNA template except for two polypurine tracts (PPTs) situated at the 5'-end and near the center of the genome. It is not clear if both polymerase and RNase H activities are simultaneous. RNase H probably can proceed both in a polymerase-dependent (RNA cut into small fragments by the same RT performing DNA synthesis) and a polymerase-independent mode (cleavage of remaining RNA fragments by free RTs). Secondly, RT performs DNA-directed plus-strand DNA synthesis using the PPTs that have not been removed by RNase H as primers. PPTs and tRNA primers are then removed by RNase H. The 3' and 5' ssDNA PBS regions hybridize to form a circular dsDNA intermediate. Strand displacement synthesis by RT to the PBS and PPT ends produces a blunt ended, linear dsDNA copy of the viral genome that includes long terminal repeats (LTRs) at both ends. Functionally, catalyzes viral DNA integration into the host chromosome, by performing a series of DNA cutting and joining reactions. This enzyme activity takes place after virion entry into a cell and reverse transcription of the RNA genome in dsDNA. The first step in the integration process is 3' processing. This step requires a complex comprising the viral genome, matrix protein, Vpr and integrase. This complex is called the pre-integration complex (PIC). The integrase protein removes 2 nucleotides from each 3' end of the viral DNA, leaving recessed CA OH's at the 3' ends. In the second step, the PIC enters cell nucleus. This process is mediated through integrase and Vpr proteins, and allows the virus to infect a non dividing cell. This ability to enter the nucleus is specific of lentiviruses, other retroviruses cannot and rely on cell division to access cell chromosomes. In the third step, termed strand transfer, the integrase protein joins the previously processed 3' ends to the 5' ends of strands of target cellular DNA at the site of integration. The 5'-ends are produced by integrase-catalyzed staggered cuts, 5 bp apart. A Y-shaped, gapped, recombination intermediate results, with the 5'-ends of the viral DNA strands and the 3' ends of target DNA strands remaining unjoined, flanking a gap of 5 bp. The last step is viral DNA integration into host chromosome. This involves host DNA repair synthesis in which the 5 bp gaps between the unjoined strands are filled in and then ligated. Since this process occurs at both cuts flanking the HIV genome, a 5 bp duplication of host DNA is produced at the ends of HIV-1 integration. Alternatively, Integrase may catalyze the excision of viral DNA just after strand transfer, this is termed disintegration. The polypeptide is Gag-Pol polyprotein (gag-pol) (Human immunodeficiency virus type 2 subtype B (isolate UC1) (HIV-2)).